A 596-amino-acid chain; its full sequence is Uptake hydrogenase large subunit (596 aa).

Ni(2+) is bound by residues Cys75, Cys78, Cys575, and Cys578.

It belongs to the [NiFe]/[NiFeSe] hydrogenase large subunit family. Heterodimer of a large and a small subunit. Ni(2+) serves as cofactor.

It is found in the cell membrane. The catalysed reaction is H2 + A = AH2. This enzyme recycles the H(2) produced by nitrogenase to increase the production of ATP and to protect nitrogenase against inhibition or damage by O(2) under carbon- or phosphate-limited conditions. This is Uptake hydrogenase large subunit (hupB) from Rhizobium leguminosarum bv. viciae.